Reading from the N-terminus, the 465-residue chain is Fumarate hydratase class II (465 aa).

Substrate is bound by residues 99-101 (SGT), 130-133 (HPND), 140-142 (STN), and Thr188. His189 serves as the catalytic Proton donor/acceptor. The active site involves Ser319. Residues Ser320 and 325 to 327 (KVN) contribute to the substrate site.

It belongs to the class-II fumarase/aspartase family. Fumarase subfamily. In terms of assembly, homotetramer.

Its subcellular location is the cytoplasm. The enzyme catalyses (S)-malate = fumarate + H2O. It participates in carbohydrate metabolism; tricarboxylic acid cycle; (S)-malate from fumarate: step 1/1. Involved in the TCA cycle. Catalyzes the stereospecific interconversion of fumarate to L-malate. This is Fumarate hydratase class II from Prochlorococcus marinus (strain SARG / CCMP1375 / SS120).